A 160-amino-acid chain; its full sequence is Large ribosomal subunit protein eL29 (160 aa).

A compositionally biased stretch (basic residues) spans 1–26 (MAKSKNHTTHNQSRKWHRNGIKKPRS). The interval 1-32 (MAKSKNHTTHNQSRKWHRNGIKKPRSQRYESL) is disordered. N6-methyllysine is present on K5. At S31 the chain carries Phosphoserine. N6-acetyllysine is present on K33. The tract at residues 119–160 (CRPKSQAKAQSKAKATAGGTAAAPVPPASAPKGAQAPTKAPQ) is disordered. Over residues 121–141 (PKSQAKAQSKAKATAGGTAAA) the composition is skewed to low complexity.

Belongs to the eukaryotic ribosomal protein eL29 family. As to quaternary structure, component of the large ribosomal subunit.

The protein resides in the cytoplasm. Functionally, component of the large ribosomal subunit. The ribosome is a large ribonucleoprotein complex responsible for the synthesis of proteins in the cell. In Sus scrofa (Pig), this protein is Large ribosomal subunit protein eL29 (RPL29).